A 350-amino-acid chain; its full sequence is Ketol-acid reductoisomerase (NADP(+)) (350 aa).

Positions Val4 to Thr187 constitute a KARI N-terminal Rossmann domain. Residues Tyr30–Gln33, Arg53, Thr58, and Asp88–Gln91 each bind NADP(+). His113 is an active-site residue. Residue Gly139 participates in NADP(+) binding. One can recognise a KARI C-terminal knotted domain in the interval Thr188–Leu333. The Mg(2+) site is built by Asp196, Glu200, Glu232, and Glu236. Position 257 (Ser257) interacts with substrate.

The protein belongs to the ketol-acid reductoisomerase family. The cofactor is Mg(2+).

It carries out the reaction (2R)-2,3-dihydroxy-3-methylbutanoate + NADP(+) = (2S)-2-acetolactate + NADPH + H(+). It catalyses the reaction (2R,3R)-2,3-dihydroxy-3-methylpentanoate + NADP(+) = (S)-2-ethyl-2-hydroxy-3-oxobutanoate + NADPH + H(+). It functions in the pathway amino-acid biosynthesis; L-isoleucine biosynthesis; L-isoleucine from 2-oxobutanoate: step 2/4. Its pathway is amino-acid biosynthesis; L-valine biosynthesis; L-valine from pyruvate: step 2/4. Involved in the biosynthesis of branched-chain amino acids (BCAA). Catalyzes an alkyl-migration followed by a ketol-acid reduction of (S)-2-acetolactate (S2AL) to yield (R)-2,3-dihydroxy-isovalerate. In the isomerase reaction, S2AL is rearranged via a Mg-dependent methyl migration to produce 3-hydroxy-3-methyl-2-ketobutyrate (HMKB). In the reductase reaction, this 2-ketoacid undergoes a metal-dependent reduction by NADPH to yield (R)-2,3-dihydroxy-isovalerate. The chain is Ketol-acid reductoisomerase (NADP(+)) from Xylella fastidiosa (strain 9a5c).